A 407-amino-acid polypeptide reads, in one-letter code: BTB/POZ and MATH domain-containing protein 1 (407 aa).

Residues 33-167 form the MATH domain; it reads NGFHEFKICG…ENSLLVRCRV (135 aa). Positions 203 to 270 constitute a BTB domain; the sequence is CDVVFQVDGE…IYWDELPDMQ (68 aa).

This sequence belongs to the Tdpoz family. In terms of assembly, homodimer or heterodimer with BPM3, BPM5 and BPM6. Interacts with CUL3A and CUL3B. Interacts with RAP2-4 and RAP2-13. Binds to MYB56 at the promoter of FLOWERING LOCUS T (FT). As to expression, ubiquitous.

Its subcellular location is the nucleus. It participates in protein modification; protein ubiquitination. In terms of biological role, may act as a substrate-specific adapter of an E3 ubiquitin-protein ligase complex (CUL3-RBX1-BTB) which mediates the ubiquitination and subsequent proteasomal degradation of target proteins. The polypeptide is BTB/POZ and MATH domain-containing protein 1 (BPM1) (Arabidopsis thaliana (Mouse-ear cress)).